We begin with the raw amino-acid sequence, 258 residues long: MRQDQRSYNELRPIKITRNFIKYAEGSCLIEMGNTKVIITATIDDKVPPFKKGSGEGWITAEYSMLPRATQQRNVRDINKLRLSGRSHEIQRLIGRALRAGINFKALGERVIILDCDVIQADGGTRTASITGGFIAMFDACKKLYDDKVIENFPITDFVAAVSVGICDGVEMLDLCFEEDSKASVDMNLVMNDKGEFIEIQGTAEGGAFTQEQFEKLLELGKQGIQKIIEIQREVLGEDSKLIGSVPKDEKTSGCDQE.

Phosphate is bound by residues Arg-86 and 124-126; that span reads GTR.

Belongs to the RNase PH family. As to quaternary structure, homohexameric ring arranged as a trimer of dimers.

The catalysed reaction is tRNA(n+1) + phosphate = tRNA(n) + a ribonucleoside 5'-diphosphate. Its function is as follows. Phosphorolytic 3'-5' exoribonuclease that plays an important role in tRNA 3'-end maturation. Removes nucleotide residues following the 3'-CCA terminus of tRNAs; can also add nucleotides to the ends of RNA molecules by using nucleoside diphosphates as substrates, but this may not be physiologically important. Probably plays a role in initiation of 16S rRNA degradation (leading to ribosome degradation) during starvation. This chain is Ribonuclease PH, found in Caldicellulosiruptor saccharolyticus (strain ATCC 43494 / DSM 8903 / Tp8T 6331).